An 83-amino-acid polypeptide reads, in one-letter code: Exodeoxyribonuclease 7 small subunit (83 aa).

The protein belongs to the XseB family. In terms of assembly, heterooligomer composed of large and small subunits.

Its subcellular location is the cytoplasm. The catalysed reaction is Exonucleolytic cleavage in either 5'- to 3'- or 3'- to 5'-direction to yield nucleoside 5'-phosphates.. Its function is as follows. Bidirectionally degrades single-stranded DNA into large acid-insoluble oligonucleotides, which are then degraded further into small acid-soluble oligonucleotides. This Nitrobacter winogradskyi (strain ATCC 25391 / DSM 10237 / CIP 104748 / NCIMB 11846 / Nb-255) protein is Exodeoxyribonuclease 7 small subunit.